Consider the following 90-residue polypeptide: uncharacterized protein (90 aa).

This is an uncharacterized protein from Escherichia coli (Bacteriophage T3).